A 522-amino-acid chain; its full sequence is Zinc finger and BTB domain-containing protein 18 (522 aa).

The BTB domain maps to 24–91; that stretch reads CDCTVLVGDA…MYEGKLQFKD (68 aa). Residues 121–143 show a composition bias toward basic and acidic residues; that stretch reads ATTEADSTKKEEDASSCSDKVES. Positions 121–166 are disordered; that stretch reads ATTEADSTKKEEDASSCSDKVESLSDGSSHMAGDLPSDEDEGEDDK. Position 157 is a phosphoserine (Ser-157). Residue Lys-273 forms a Glycyl lysine isopeptide (Lys-Gly) (interchain with G-Cter in SUMO2) linkage. The interval 310-427 is interaction with DNMT3A; the sequence is EPAHLAPLRE…TFSCMYTLKR (118 aa). 4 consecutive C2H2-type zinc fingers follow at residues 370–392, 410–432, 438–460, and 466–489; these read FMCP…LSTH, PTCS…ERTH, YTCT…AVVH, and HACK…RKFH. Phosphoserine is present on residues Ser-516 and Ser-517.

Belongs to the krueppel C2H2-type zinc-finger protein family. ZBTB18 subfamily. Interacts with DNMT3A.

It is found in the nucleus. Functionally, transcriptional repressor that plays a role in various developmental processes such as myogenesis and brain development. Specifically binds the consensus DNA sequence 5'-[AC]ACATCTG[GT][AC]-3' which contains the E box core, and acts by recruiting chromatin remodeling multiprotein complexes. Plays a key role in myogenesis by directly repressing the expression of ID2 and ID3, 2 inhibitors of skeletal myogenesis. Also involved in controlling cell division of progenitor cells and regulating the survival of postmitotic cortical neurons. May also play a role in the organization of chromosomes in the nucleus. The polypeptide is Zinc finger and BTB domain-containing protein 18 (Zbtb18) (Rattus norvegicus (Rat)).